We begin with the raw amino-acid sequence, 443 residues long: Aspartate--tRNA(Asp/Asn) ligase (443 aa).

E175 contributes to the L-aspartate binding site. The aspartate stretch occupies residues 197–200 (QLFK). L-aspartate is bound at residue R219. ATP contacts are provided by residues 219-221 (RAE), 227-229 (RHL), and E366. The Mg(2+) site is built by E366 and S369. 2 residues coordinate L-aspartate: S369 and R373. 414-417 (GCER) is an ATP binding site.

The protein belongs to the class-II aminoacyl-tRNA synthetase family. Type 2 subfamily. As to quaternary structure, homodimer. Mg(2+) is required as a cofactor.

Its subcellular location is the cytoplasm. The enzyme catalyses tRNA(Asx) + L-aspartate + ATP = L-aspartyl-tRNA(Asx) + AMP + diphosphate. Its function is as follows. Aspartyl-tRNA synthetase with relaxed tRNA specificity since it is able to aspartylate not only its cognate tRNA(Asp) but also tRNA(Asn). Reaction proceeds in two steps: L-aspartate is first activated by ATP to form Asp-AMP and then transferred to the acceptor end of tRNA(Asp/Asn). This is Aspartate--tRNA(Asp/Asn) ligase from Methanococcoides burtonii (strain DSM 6242 / NBRC 107633 / OCM 468 / ACE-M).